The following is a 96-amino-acid chain: Class I hydrophobin 3 (96 aa).

Positions 1-18 are cleaved as a signal peptide; the sequence is MQFAKIASVLAMAAAAVA. 4 cysteine pairs are disulfide-bonded: Cys-43/Cys-72, Cys-51/Cys-66, Cys-52/Cys-57, and Cys-73/Cys-92.

Belongs to the fungal hydrophobin family.

It is found in the secreted. The protein resides in the cell wall. Aerial growth, conidiation, and dispersal of filamentous fungi in the environment rely upon a capability of their secreting small amphipathic proteins called hydrophobins (HPBs) with low sequence identity. Class I can self-assemble into an outermost layer of rodlet bundles on aerial cell surfaces, conferring cellular hydrophobicity that supports fungal growth, development and dispersal; whereas Class II form highly ordered films at water-air interfaces through intermolecular interactions but contribute nothing to the rodlet structure. Does not seem to be important for the ability to cause seedling disease. The protein is Class I hydrophobin 3 of Gibberella moniliformis (Maize ear and stalk rot fungus).